The sequence spans 93 residues: Small ribosomal subunit protein uS19 (93 aa).

It belongs to the universal ribosomal protein uS19 family.

In terms of biological role, protein S19 forms a complex with S13 that binds strongly to the 16S ribosomal RNA. In Lacticaseibacillus paracasei (strain ATCC 334 / BCRC 17002 / CCUG 31169 / CIP 107868 / KCTC 3260 / NRRL B-441) (Lactobacillus paracasei), this protein is Small ribosomal subunit protein uS19.